Consider the following 216-residue polypeptide: MPDITIALSKGRIFEDTIPFLKAAGIVPSDDPDTSRKLIIGTNRPDVRLVMVRATDVPTYVQYGAADLGVAGKDVLLEHDGIGLYQPLDLKIARCRMMVAVRDDYDYASAVFRGARLRVATKYVKTARNHFAAKGMHVDLIKLYGSMELAPLVDLADAIVDLVSTGSTLKANHLQAIEEIMPISARLIVNQAALKLKNTAIQPLLETFSAAVPKNL.

Belongs to the ATP phosphoribosyltransferase family. Short subfamily. In terms of assembly, heteromultimer composed of HisG and HisZ subunits.

The protein localises to the cytoplasm. The catalysed reaction is 1-(5-phospho-beta-D-ribosyl)-ATP + diphosphate = 5-phospho-alpha-D-ribose 1-diphosphate + ATP. It participates in amino-acid biosynthesis; L-histidine biosynthesis; L-histidine from 5-phospho-alpha-D-ribose 1-diphosphate: step 1/9. In terms of biological role, catalyzes the condensation of ATP and 5-phosphoribose 1-diphosphate to form N'-(5'-phosphoribosyl)-ATP (PR-ATP). Has a crucial role in the pathway because the rate of histidine biosynthesis seems to be controlled primarily by regulation of HisG enzymatic activity. The sequence is that of ATP phosphoribosyltransferase from Nitrosomonas europaea (strain ATCC 19718 / CIP 103999 / KCTC 2705 / NBRC 14298).